Consider the following 2181-residue polypeptide: Genome polyprotein (2181 aa).

Residue Gly80 is the site of N-myristoyl glycine; by host attachment. Interaction with host receptor ANTXR1 stretches follow at residues 316-337 (DYRT…PPNW) and 761-772 (RFGLYANPSGSG). Residues 1165 to 1333 (LGKTNLAQSL…YKKHTRLNFD (169 aa)) enclose the SF3 helicase domain. 1197-1204 (GKPGCGKS) serves as a coordination point for ATP. Positions 1472–1500 (EETESEGSVKAPRSENAYDGPKKNSKPPG) are disordered. Tyr1489 carries the post-translational modification O-(5'-phospho-RNA)-tyrosine. The Peptidase C3 domain maps to 1511–1704 (NVDMGFEAAV…AGTYISKLGL (194 aa)). Catalysis depends on His1556, which acts as the For protease 3C activity and deubiquitinase activity. The active-site For protease 3C activity is the Asp1592. Cys1668 acts as the For protease 3C activity and deubiquitinase activity in catalysis. In terms of domain architecture, RdRp catalytic spans 1950 to 2068 (KNTYDVDYSA…GTDYDLDFNE (119 aa)). Active-site for RdRp activity residues include Asp1956 and Asp2054.

In terms of assembly, interacts with host entry receptor ANTRX1. As to quaternary structure, interacts with host IRF3; this interaction is involved in the suppression of IRF3 and IRF7 expression and phosphorylation by the virus. Interacts with host IRF7; this interaction is involved in the suppression of IRF3 and IRF7 expression and phosphorylation by the virus. Interacts with host MAVS; this interaction allows the cleavage of MAVS and subsequent suppression of host immunity. Interacts with host TRIF; this interaction allows the cleavage of TRIF and subsequent suppression of host immunity. Interacts with host TANK; this interaction allows the cleavage of TANK and subsequent suppression of host immunity. Interacts with host RIGI. Interacts with host TBK1. Interacts with host TRAF3. In terms of processing, specific enzymatic cleavages by the viral protease in vivo yield a variety of precursors and mature proteins. The polyprotein seems to be cotranslationally cleaved at the 2A/2B junction by a ribosomal skip from one codon to the next without formation of a peptide bond. This process would release the P1-2A peptide from the translational complex. Post-translationally, during virion maturation, immature virions are rendered infectious following cleavage of VP0 into VP4 and VP2. This maturation seems to be an autocatalytic event triggered by the presence of RNA in the capsid and is followed by a conformational change of the particle. Myristoylation is required during RNA encapsidation and formation of the mature virus particle. In terms of processing, uridylylated by the polymerase and is covalently linked to the 5'-end of genomic RNA. This uridylylated form acts as a nucleotide-peptide primer for the polymerase.

The protein localises to the virion. It localises to the host cytoplasm. It is found in the host nucleus. The protein resides in the host nucleolus. Its subcellular location is the host cytoplasmic vesicle membrane. The catalysed reaction is RNA(n) + a ribonucleoside 5'-triphosphate = RNA(n+1) + diphosphate. It catalyses the reaction Selective cleavage of Gln-|-Gly bond in the poliovirus polyprotein. In other picornavirus reactions Glu may be substituted for Gln, and Ser or Thr for Gly.. The enzyme catalyses Thiol-dependent hydrolysis of ester, thioester, amide, peptide and isopeptide bonds formed by the C-terminal Gly of ubiquitin (a 76-residue protein attached to proteins as an intracellular targeting signal).. It carries out the reaction ATP + H2O = ADP + phosphate + H(+). In terms of biological role, forms an icosahedral capsid of pseudo T=3 symmetry with capsid proteins VP2 and VP3. Together they form an icosahedral capsid composed of 60 copies of each VP1, VP2, and VP3, with a diameter of approximately 325 Angstroms. VP4 lies on the inner surface of the protein shell formed by VP1, VP2 and VP3. All the three latter proteins contain a beta-sheet structure called beta-barrel jelly roll. VP1 is situated at the 12 fivefold axes, whereas VP2 and VP3 are located at the quasi-sixfold axes. Binds the host receptor ANTXR1 for attachment and uncoating (entry). Functionally, forms an icosahedral capsid of pseudo T=3 symmetry with capsid proteins VP2 and VP3. Together they form an icosahedral capsid composed of 60 copies of each VP1, VP2, and VP3, with a diameter of approximately 270 Angstroms. VP4 lies on the inner surface of the protein shell formed by VP1, VP2 and VP3. All the three latter proteins contain a beta-sheet structure called beta-barrel jelly roll. VP1 is situated at the 12 fivefold axes, whereas VP2 and VP3 are located at the quasi-sixfold axes. Binds the host receptor ANTXR1 for attachment and uncoating (entry). Its function is as follows. Forms an icosahedral capsid of pseudo T=3 symmetry with capsid proteins VP2 and VP3. Together they form an icosahedral capsid composed of 60 copies of each VP1, VP2, and VP3, with a diameter of approximately 270 Angstroms. VP4 lies on the inner surface of the protein shell formed by VP1, VP2 and VP3. All the three latter proteins contain a beta-sheet structure called beta-barrel jelly roll. VP1 is situated at the 12 fivefold axes, whereas VP2 and VP3 are located at the quasi-sixfold axes. Vp3 also seems to be involved in the binding to host receptor ANTXR1 for attachment and uncoating (entry). Lies on the inner surface of the capsid shell. After binding to the host receptor, the capsid undergoes conformational changes. Capsid protein VP4 is released, capsid protein VP1 N-terminus is externalized, and together, they shape a pore in the host membrane through which the viral genome is translocated into the host cell cytoplasm. After genome has been released, the channel shrinks. In terms of biological role, VP0 precursor is a component of immature procapsids. Functionally, mediates self-processing of the polyprotein by a translational effect termed 'ribosome skipping'. Mechanistically, 2A-mediated cleavage occurs between the C-terminal glycine and the proline of the downstream protein 2B. Its function is as follows. Plays an essential role in the virus replication cycle by acting as a viroporin. Creates a pore in the host endoplasmic reticulum and as a consequence releases Ca2+ in the cytoplasm of infected cell. In turn, high levels of cytoplasmic calcium may trigger membrane trafficking and transport of viral ER-associated proteins to viroplasms, sites of viral genome replication. Associates with and induces structural rearrangements of intracellular membranes. In terms of biological role, covalently linked to the 5'-end of both the positive-strand and negative-strand genomic RNAs. Acts as a genome-linked replication primer. Functionally, cysteine protease that generates mature viral proteins from the precursor polyprotein. Inactivates crucial host adapter molecules in order to suppress antiviral type-I interferon (type-I IFN) and NF-kappaB production to escape host antiviral innate immune responses. Deubiquitinase that acts on both lysine-48- and lysine-63-linked polyubiquitin chains and inhibits the ubiquitination of the ATP-dependent RNA helicase RIGI, TANK-binding kinase 1 (TBK1), and TNF receptor-associated factor 3 (TRAF3), thereby blocking the expression of IFN-beta and IFN stimulated gene 54 (ISG54). Induces host IRF3 and IRF7 degradation thereby suppressing IRF3- and IRF7-induced type-I IFN production. Also decreases host IRF3 phosphorylation leading to negligible IRF3 activation. Cleaves host MAVS, TRIF and TANK, which are then unable to regulate pattern recognition receptor (PRR)-mediated type-I IFN production. Inhibits the integrated stress response (ISR) in the infected cell by disrupting eIF4GI-G3BP1 interaction. Stress granule formation is thus inhibited. Its function is as follows. Replicates the genomic and antigenomic RNAs by recognizing replications specific signals. Performs VPg uridylylation. This is Genome polyprotein from Sus scrofa (Pig).